The chain runs to 316 residues: HPr kinase/phosphorylase (316 aa).

Catalysis depends on residues His143 and Lys164. 158-165 is a binding site for ATP; the sequence is GEAGSGKS. Ser165 lines the Mg(2+) pocket. Catalysis depends on Asp182, which acts as the Proton acceptor; for phosphorylation activity. Proton donor; for dephosphorylation activity. The important for the catalytic mechanism of both phosphorylation and dephosphorylation stretch occupies residues 206 to 215; the sequence is LEVRGLGVLN. A Mg(2+)-binding site is contributed by Glu207. Arg251 is an active-site residue. Residues 272–277 are important for the catalytic mechanism of dephosphorylation; the sequence is PVMPGR.

Belongs to the HPrK/P family. Homohexamer. Requires Mg(2+) as cofactor.

The enzyme catalyses [HPr protein]-L-serine + ATP = [HPr protein]-O-phospho-L-serine + ADP + H(+). It catalyses the reaction [HPr protein]-O-phospho-L-serine + phosphate + H(+) = [HPr protein]-L-serine + diphosphate. Catalyzes the ATP- as well as the pyrophosphate-dependent phosphorylation of a specific serine residue in HPr, a phosphocarrier protein of the phosphoenolpyruvate-dependent sugar phosphotransferase system (PTS). HprK/P also catalyzes the pyrophosphate-producing, inorganic phosphate-dependent dephosphorylation (phosphorolysis) of seryl-phosphorylated HPr (P-Ser-HPr). The protein is HPr kinase/phosphorylase of Xanthomonas oryzae pv. oryzae (strain MAFF 311018).